The following is a 199-amino-acid chain: Small ribosomal subunit protein mS38 (199 aa).

The protein belongs to the mitochondrion-specific ribosomal protein mS38 family. As to quaternary structure, component of the mitochondrial small ribosomal subunit (mt-SSU). Mature mammalian 55S mitochondrial ribosomes consist of a small (28S) and a large (39S) subunit. The 28S small subunit contains a 12S ribosomal RNA (12S mt-rRNA) and 30 different proteins. The 39S large subunit contains a 16S rRNA (16S mt-rRNA), a copy of mitochondrial valine transfer RNA (mt-tRNA(Val)), which plays an integral structural role, and 52 different proteins. Interacts with Aurora-A. Ubiquitously expressed and especially highly expressed in heart, skeletal muscle and testis.

The protein resides in the mitochondrion matrix. Its subcellular location is the nucleus. In terms of biological role, may act as a negative regulator of Aurora-A kinase, by down-regulation through proteasome-dependent degradation. The protein is Small ribosomal subunit protein mS38 (AURKAIP1) of Homo sapiens (Human).